An 87-amino-acid chain; its full sequence is Large ribosomal subunit protein bL27 (87 aa).

Positions 1 to 21 (MAHKKAGGSSRNGRDSESKRL) are disordered.

Belongs to the bacterial ribosomal protein bL27 family.

The chain is Large ribosomal subunit protein bL27 from Burkholderia multivorans (strain ATCC 17616 / 249).